The following is a 504-amino-acid chain: Probable phenylalanine--tRNA ligase beta subunit (504 aa).

The 77-residue stretch at Ile270–Met346 folds into the B5 domain. Mg(2+) is bound by residues Asp324, Asp330, Glu333, and Asp334.

Belongs to the phenylalanyl-tRNA synthetase beta subunit family. Type 2 subfamily. Tetramer of two alpha and two beta subunits. Requires Mg(2+) as cofactor.

It is found in the cytoplasm. The enzyme catalyses tRNA(Phe) + L-phenylalanine + ATP = L-phenylalanyl-tRNA(Phe) + AMP + diphosphate + H(+). This chain is Probable phenylalanine--tRNA ligase beta subunit, found in Vairimorpha ceranae (strain BRL01) (Microsporidian parasite).